The sequence spans 410 residues: Argininosuccinate synthase (410 aa).

Residues 10-18 (AYSGGLDTS) and Ala37 each bind ATP. L-citrulline is bound by residues Tyr90 and Ser95. Residue Gly120 coordinates ATP. L-aspartate is bound by residues Thr122, Asn126, and Asp127. Residue Asn126 participates in L-citrulline binding. Residues Arg130, Ser182, Ser191, Glu267, and Tyr279 each coordinate L-citrulline.

This sequence belongs to the argininosuccinate synthase family. Type 1 subfamily. Homotetramer.

The protein resides in the cytoplasm. It carries out the reaction L-citrulline + L-aspartate + ATP = 2-(N(omega)-L-arginino)succinate + AMP + diphosphate + H(+). Its pathway is amino-acid biosynthesis; L-arginine biosynthesis; L-arginine from L-ornithine and carbamoyl phosphate: step 2/3. The chain is Argininosuccinate synthase from Polynucleobacter asymbioticus (strain DSM 18221 / CIP 109841 / QLW-P1DMWA-1) (Polynucleobacter necessarius subsp. asymbioticus).